We begin with the raw amino-acid sequence, 2282 residues long: Acetyl-CoA carboxylase (2282 aa).

The Biotin carboxylation domain occupies 16 to 515; sequence NIEKILIANN…HTGWLDQLIS (500 aa). The 191-residue stretch at 170-360 folds into the ATP-grasp domain; the sequence is YSECNGVPSE…LPATQLQIAM (191 aa). ATP is bound at residue 196–253; that stretch reads AQRVGFPAMIKASEGGGGKGIRKVTSMEDLESSFRQVQNEVPGSPIFFMKLVSNARHL. Residues E319, E331, and N333 each coordinate Mn(2+). R335 is an active-site residue. The Biotinyl-binding domain occupies 646-720; it reads FSQEYDPSIL…APGAIIANLE (75 aa). The residue at position 687 (K687) is an N6-biotinyllysine. Residues 1109–1129 show a composition bias toward low complexity; the sequence is GSNSGSPTYGSPLIRSISSSG. Residues 1109–1141 form a disordered region; that stretch reads GSNSGSPTYGSPLIRSISSSGGSSGGSGFQISP. The 357-residue stretch at 1495 to 1851 folds into the CoA carboxyltransferase N-terminal domain; it reads PYPIMDAVQR…SGGEMVPIIS (357 aa). Positions 1495–2178 are carboxyltransferase; that stretch reads PYPIMDAVQR…EEDKLKLIDK (684 aa). The CoA site is built by R1761, K2068, and R2070. In terms of domain architecture, CoA carboxyltransferase C-terminal spans 1852–2178; that stretch reads PIDSPHRDIE…EEDKLKLIDK (327 aa).

The cofactor is biotin. Mn(2+) is required as a cofactor.

The protein resides in the cytoplasm. It catalyses the reaction hydrogencarbonate + acetyl-CoA + ATP = malonyl-CoA + ADP + phosphate + H(+). The enzyme catalyses N(6)-biotinyl-L-lysyl-[protein] + hydrogencarbonate + ATP = N(6)-carboxybiotinyl-L-lysyl-[protein] + ADP + phosphate + H(+). It participates in lipid metabolism; malonyl-CoA biosynthesis; malonyl-CoA from acetyl-CoA: step 1/1. Functionally, catalyzes the rate-limiting reaction in the biogenesis of long-chain fatty acids. Carries out three functions: biotin carboxyl carrier protein, biotin carboxylase and carboxyltransferase. This chain is Acetyl-CoA carboxylase (accA), found in Dictyostelium discoideum (Social amoeba).